The chain runs to 784 residues: Lon protease (784 aa).

In terms of domain architecture, Lon N-terminal spans 6–207 (LPLMALRDMV…TVITTLTSNI (202 aa)). 356–363 (GPPGVGKT) lines the ATP pocket. Residues 592–773 (EDQIGSTTGL…DQVLKHALVE (182 aa)) enclose the Lon proteolytic domain. Active-site residues include Ser679 and Lys722.

The protein belongs to the peptidase S16 family. As to quaternary structure, homohexamer. Organized in a ring with a central cavity.

Its subcellular location is the cytoplasm. It catalyses the reaction Hydrolysis of proteins in presence of ATP.. In terms of biological role, ATP-dependent serine protease that mediates the selective degradation of mutant and abnormal proteins as well as certain short-lived regulatory proteins. Required for cellular homeostasis and for survival from DNA damage and developmental changes induced by stress. Degrades polypeptides processively to yield small peptide fragments that are 5 to 10 amino acids long. Binds to DNA in a double-stranded, site-specific manner. This is Lon protease from Rickettsia prowazekii (strain Madrid E).